We begin with the raw amino-acid sequence, 411 residues long: Translation initiation factor 2 subunit gamma (411 aa).

The tr-type G domain occupies 9–201 (QPTVNIGMVG…AIEKYIPTPE (193 aa)). A G1 region spans residues 18-25 (GHVDHGKS). Mg(2+) is bound by residues Asp21, Ser25, Gly46, and Ser48. 21-26 (DHGKST) serves as a coordination point for GTP. Residues 46–50 (GISIK) are G2. The interval 88–91 (DAPG) is G3. GTP-binding positions include 144–147 (NKID) and 179–181 (SAY). The tract at residues 144 to 147 (NKID) is G4. Positions 179 to 181 (SAY) are G5.

Belongs to the TRAFAC class translation factor GTPase superfamily. Classic translation factor GTPase family. EIF2G subfamily. In terms of assembly, heterotrimer composed of an alpha, a beta and a gamma chain. It depends on Mg(2+) as a cofactor.

The catalysed reaction is GTP + H2O = GDP + phosphate + H(+). EIF-2 functions in the early steps of protein synthesis by forming a ternary complex with GTP and initiator tRNA. The polypeptide is Translation initiation factor 2 subunit gamma (Thermoplasma volcanium (strain ATCC 51530 / DSM 4299 / JCM 9571 / NBRC 15438 / GSS1)).